The primary structure comprises 203 residues: Glycerol-3-phosphate acyltransferase (203 aa).

Transmembrane regions (helical) follow at residues 3–23 (ILLATVAAYLIGSVSFAVVVS), 51–71 (KAAILTLVGDAFKGWLAVWLV), 74–94 (FGIGGEIGVALAAIAVFLGHL), 116–136 (AVHPVLGLATALTWLIVAFFF), 140–160 (SLAALVAAVFAPIFDVFLFGT), and 164–178 (PVAWAVLAMSVLLIW).

It belongs to the PlsY family. Probably interacts with PlsX.

It localises to the cell inner membrane. The catalysed reaction is an acyl phosphate + sn-glycerol 3-phosphate = a 1-acyl-sn-glycero-3-phosphate + phosphate. Its pathway is lipid metabolism; phospholipid metabolism. Functionally, catalyzes the transfer of an acyl group from acyl-phosphate (acyl-PO(4)) to glycerol-3-phosphate (G3P) to form lysophosphatidic acid (LPA). This enzyme utilizes acyl-phosphate as fatty acyl donor, but not acyl-CoA or acyl-ACP. The chain is Glycerol-3-phosphate acyltransferase from Burkholderia pseudomallei (strain K96243).